Consider the following 261-residue polypeptide: MIVVKIGGSVVCKDASKVIQNLPKYADRAVVIHGGGCLVNELLKRMGIEPKFLTHPGGLVSRYTDWETLKVFVMAMGWINKYIVASLHGLGVQALGLTGADLGVVVAKRKERVLVIDERGRQRVVDGGYVGKIAEIRVDKLTPPPLKVLAPVAVSEKGELLNIDGDQLAFDVAREAKAERLILLSDVEGLILGGKVVPRLTPEEAEKLVKSEEVRGGMKRKLLMASEAAKLGIEVVISSGLVDSPIDAALNGAGTHIIKNI.

Substrate-binding positions include 35 to 36 (GG), Arg62, and Asn162.

It belongs to the acetylglutamate kinase family. LysZ subfamily.

The protein localises to the cytoplasm. It carries out the reaction [amino-group carrier protein]-C-terminal-N-(1,4-dicarboxybutan-1-yl)-L-glutamine + ATP = [amino-group carrier protein]-C-terminal-N-(1-carboxy-5-phosphooxy-5-oxopentan-1-yl)-L-glutamine + ADP. It catalyses the reaction [amino-group carrier protein]-C-terminal-gamma-(L-glutamyl)-L-glutamate + ATP = [amino-group carrier protein]-C-terminal-gamma-(5-phospho-L-glutamyl)-L-glutamate + ADP. It functions in the pathway amino-acid biosynthesis; L-lysine biosynthesis via AAA pathway; L-lysine from L-alpha-aminoadipate (Thermus route): step 2/5. Its pathway is amino-acid biosynthesis; L-arginine biosynthesis. Involved in both the arginine and lysine biosynthetic pathways. Phosphorylates the LysW-bound precursors glutamate (for arginine biosynthesis), respectively alpha-aminoadipate (for lysine biosynthesis). This is Putative [LysW]-aminoadipate/[LysW]-glutamate kinase from Pyrobaculum aerophilum (strain ATCC 51768 / DSM 7523 / JCM 9630 / CIP 104966 / NBRC 100827 / IM2).